The following is an 843-amino-acid chain: Alpha-L-fucosidase 2 (843 aa).

Positions 1–27 (MAEKSSFFVHFSCLLLLLTIIITCGEG) are cleaved as a signal peptide. Residues asparagine 62, asparagine 253, asparagine 365, and asparagine 605 are each glycosylated (N-linked (GlcNAc...) asparagine).

It belongs to the glycosyl hydrolase 95 family. Ubiquitous. Highest expression in vascular tissues, leaf trichomes, root elongation zone and emerging lateral roots.

It is found in the secreted. The protein localises to the extracellular space. It localises to the apoplast. It catalyses the reaction an alpha-L-fucoside + H2O = L-fucose + an alcohol. In terms of biological role, hydrolyzes alpha-1,2-linked fucose. Also active on fucosylated xyloglucan oligosaccharides. No activity with 3-fucosyllactose, p-nitrophenyl-alpha-I-fucopyranoside, lacto-N-fucopentaose II, lacto-N-fucopentaose III or alpha 1,6-fucosylated chitopentaose. Involved in apoplastic xyloglucan metabolism. In Arabidopsis thaliana (Mouse-ear cress), this protein is Alpha-L-fucosidase 2 (FUC95A).